Consider the following 246-residue polypeptide: ATP synthase subunit a (246 aa).

Transmembrane regions (helical) follow at residues 34-54 (GQTM…TFIG), 92-112 (WVPL…LGQL), 130-150 (DINT…YAGL), 155-175 (FGYF…VLEF), and 196-216 (VVAV…MILF).

It belongs to the ATPase A chain family. In terms of assembly, F-type ATPases have 2 components, CF(1) - the catalytic core - and CF(0) - the membrane proton channel. CF(1) has five subunits: alpha(3), beta(3), gamma(1), delta(1), epsilon(1). CF(0) has four main subunits: a, b, b' and c.

Its subcellular location is the cell inner membrane. In terms of biological role, key component of the proton channel; it plays a direct role in the translocation of protons across the membrane. In Gloeobacter violaceus (strain ATCC 29082 / PCC 7421), this protein is ATP synthase subunit a.